The sequence spans 587 residues: Aspartate--tRNA ligase (587 aa).

Glu174 contributes to the L-aspartate binding site. The segment at 198 to 201 (QITK) is aspartate. Arg220 is a binding site for L-aspartate. ATP-binding positions include 220 to 222 (RDE) and Gln229. Position 443 (His443) interacts with L-aspartate. Glu477 serves as a coordination point for ATP. Residue Arg484 coordinates L-aspartate. 529 to 532 (GLDR) contacts ATP.

The protein belongs to the class-II aminoacyl-tRNA synthetase family. Type 1 subfamily. In terms of assembly, homodimer.

It is found in the cytoplasm. The catalysed reaction is tRNA(Asp) + L-aspartate + ATP = L-aspartyl-tRNA(Asp) + AMP + diphosphate. Catalyzes the attachment of L-aspartate to tRNA(Asp) in a two-step reaction: L-aspartate is first activated by ATP to form Asp-AMP and then transferred to the acceptor end of tRNA(Asp). The protein is Aspartate--tRNA ligase of Streptococcus pneumoniae serotype 4 (strain ATCC BAA-334 / TIGR4).